A 225-amino-acid polypeptide reads, in one-letter code: Small ribosomal subunit protein eS1 (225 aa).

Belongs to the eukaryotic ribosomal protein eS1 family.

The protein is Small ribosomal subunit protein eS1 of Methanococcus maripaludis (strain DSM 14266 / JCM 13030 / NBRC 101832 / S2 / LL).